Reading from the N-terminus, the 267-residue chain is tRNA pseudouridine synthase A (267 aa).

The Nucleophile role is filled by Asp-52. Tyr-113 lines the substrate pocket.

The protein belongs to the tRNA pseudouridine synthase TruA family. In terms of assembly, homodimer.

The catalysed reaction is uridine(38/39/40) in tRNA = pseudouridine(38/39/40) in tRNA. Its function is as follows. Formation of pseudouridine at positions 38, 39 and 40 in the anticodon stem and loop of transfer RNAs. The chain is tRNA pseudouridine synthase A from Chlamydia pneumoniae (Chlamydophila pneumoniae).